Consider the following 471-residue polypeptide: Galactolipase DONGLE, chloroplastic (471 aa).

A chloroplast-targeting transit peptide spans 1–88 (MAAKVFTQNP…PLSRVWREIQ (88 aa)). The interval 44 to 71 (SSSTMSPPISSSPLSLPSSSSSQAIPPS) is disordered. The GXSXG signature appears at 284-288 (GHSMG). Ser-286 functions as the Acyl-ester intermediate in the catalytic mechanism. Active-site charge relay system residues include Asp-349 and His-400.

The protein belongs to the AB hydrolase superfamily. Lipase family. As to expression, expressed in leaves and seedlings. Not detected in flowers, siliques or roots.

It is found in the plastid. It localises to the chloroplast. It catalyses the reaction a 1,2-diacyl-3-O-(beta-D-galactosyl)-sn-glycerol + 2 H2O = 3-beta-D-galactosyl-sn-glycerol + 2 a fatty acid + 2 H(+). It carries out the reaction a 1,2-diacyl-sn-glycero-3-phosphocholine + H2O = a 2-acyl-sn-glycero-3-phosphocholine + a fatty acid + H(+). The enzyme catalyses a 1,2-diacyl-3-O-[alpha-D-galactosyl-(1-&gt;6)-beta-D-galactosyl]-sn-glycerol + H2O = acyl-3-O-[alpha-D-galactosyl-(1-&gt;6)-beta-D-galactosyl]-sn-glycerol + a fatty acid + H(+). In terms of biological role, sn-1-specific phospholipase that releases free fatty acids from phosphatidylcholine. Has a higher galactolipase activity than phospholipase A1 activity when digalactosyldiacylglycerol (DGDG) is used as substrate. Catalyzes the initial step of jasmonic acid biosynthesis. Required for the biosynthesis of basal-level endogenous jasmonate in vegetative tissues. Regulates leaves growth. Not essential for jasmonate biosynthesis after wounding or upon pathogen infection. This chain is Galactolipase DONGLE, chloroplastic, found in Arabidopsis thaliana (Mouse-ear cress).